Reading from the N-terminus, the 151-residue chain is Meiotically up-regulated gene 114 protein (151 aa).

Its subcellular location is the cytoplasm. In terms of biological role, has a role in meiosis. This chain is Meiotically up-regulated gene 114 protein (mug114), found in Schizosaccharomyces pombe (strain 972 / ATCC 24843) (Fission yeast).